A 340-amino-acid polypeptide reads, in one-letter code: UDP-N-acetylglucosamine--N-acetylmuramyl-(pentapeptide) pyrophosphoryl-undecaprenol N-acetylglucosamine transferase (340 aa).

UDP-N-acetyl-alpha-D-glucosamine is bound by residues T15 to G17, N127, S184, I230, and Q275.

Belongs to the glycosyltransferase 28 family. MurG subfamily.

It localises to the cell inner membrane. It carries out the reaction di-trans,octa-cis-undecaprenyl diphospho-N-acetyl-alpha-D-muramoyl-L-alanyl-D-glutamyl-meso-2,6-diaminopimeloyl-D-alanyl-D-alanine + UDP-N-acetyl-alpha-D-glucosamine = di-trans,octa-cis-undecaprenyl diphospho-[N-acetyl-alpha-D-glucosaminyl-(1-&gt;4)]-N-acetyl-alpha-D-muramoyl-L-alanyl-D-glutamyl-meso-2,6-diaminopimeloyl-D-alanyl-D-alanine + UDP + H(+). It participates in cell wall biogenesis; peptidoglycan biosynthesis. Functionally, cell wall formation. Catalyzes the transfer of a GlcNAc subunit on undecaprenyl-pyrophosphoryl-MurNAc-pentapeptide (lipid intermediate I) to form undecaprenyl-pyrophosphoryl-MurNAc-(pentapeptide)GlcNAc (lipid intermediate II). This Vesicomyosocius okutanii subsp. Calyptogena okutanii (strain HA) protein is UDP-N-acetylglucosamine--N-acetylmuramyl-(pentapeptide) pyrophosphoryl-undecaprenol N-acetylglucosamine transferase.